We begin with the raw amino-acid sequence, 90 residues long: Small ribosomal subunit protein uS15 (90 aa).

It belongs to the universal ribosomal protein uS15 family. In terms of assembly, part of the 30S ribosomal subunit. Forms a bridge to the 50S subunit in the 70S ribosome, contacting the 23S rRNA.

Functionally, one of the primary rRNA binding proteins, it binds directly to 16S rRNA where it helps nucleate assembly of the platform of the 30S subunit by binding and bridging several RNA helices of the 16S rRNA. Its function is as follows. Forms an intersubunit bridge (bridge B4) with the 23S rRNA of the 50S subunit in the ribosome. This Helicobacter pylori (strain J99 / ATCC 700824) (Campylobacter pylori J99) protein is Small ribosomal subunit protein uS15.